Consider the following 140-residue polypeptide: Large ribosomal subunit protein bL17 (140 aa).

Belongs to the bacterial ribosomal protein bL17 family. As to quaternary structure, part of the 50S ribosomal subunit. Contacts protein L32.

The sequence is that of Large ribosomal subunit protein bL17 from Hyphomonas neptunium (strain ATCC 15444).